The sequence spans 276 residues: Orotidine 5'-phosphate decarboxylase (276 aa).

Substrate is bound by residues Asp40, 62-64, 93-102, Tyr228, and Arg246; these read KTH and DRKFIDIGNT. Lys95 functions as the Proton donor in the catalytic mechanism.

It belongs to the OMP decarboxylase family.

It catalyses the reaction orotidine 5'-phosphate + H(+) = UMP + CO2. The protein operates within pyrimidine metabolism; UMP biosynthesis via de novo pathway; UMP from orotate: step 2/2. In Penicillium nalgiovense, this protein is Orotidine 5'-phosphate decarboxylase (pyrG).